A 311-amino-acid polypeptide reads, in one-letter code: Putative tenascin-XA (311 aa).

Disordered regions lie at residues 1–47 (MEDK…EPRL) and 124–150 (LSAEGTTGLAPAGQTSEESRPRLSQLS). 3 Fibronectin type-III domains span residues 41–135 (PPEE…LAPA), 145–249 (RLSQ…SPRD), and 250–311 (LQFS…SCVH).

In terms of tissue distribution, expressed in the adrenal gland.

This chain is Putative tenascin-XA (TNXA), found in Homo sapiens (Human).